An 87-amino-acid polypeptide reads, in one-letter code: Small ribosomal subunit protein bS20 (87 aa).

Positions 1–26 (MANIKSAKKRAVQSEKARKHNASRRS) are disordered.

This sequence belongs to the bacterial ribosomal protein bS20 family.

Functionally, binds directly to 16S ribosomal RNA. This chain is Small ribosomal subunit protein bS20, found in Salmonella typhi.